The following is a 243-amino-acid chain: 2-C-methyl-D-erythritol 4-phosphate cytidylyltransferase (243 aa).

This sequence belongs to the IspD/TarI cytidylyltransferase family. IspD subfamily.

It catalyses the reaction 2-C-methyl-D-erythritol 4-phosphate + CTP + H(+) = 4-CDP-2-C-methyl-D-erythritol + diphosphate. Its pathway is isoprenoid biosynthesis; isopentenyl diphosphate biosynthesis via DXP pathway; isopentenyl diphosphate from 1-deoxy-D-xylulose 5-phosphate: step 2/6. In terms of biological role, catalyzes the formation of 4-diphosphocytidyl-2-C-methyl-D-erythritol from CTP and 2-C-methyl-D-erythritol 4-phosphate (MEP). This is 2-C-methyl-D-erythritol 4-phosphate cytidylyltransferase from Rhodopirellula baltica (strain DSM 10527 / NCIMB 13988 / SH1).